Consider the following 294-residue polypeptide: Diaminopimelate epimerase (294 aa).

Residues Asn11 and Asn78 each coordinate substrate. The Proton donor role is filled by Cys87. Substrate contacts are provided by residues 88 to 89, Asn167, Asn203, and 221 to 222; these read GN and ER. The active-site Proton acceptor is the Cys230. Position 231-232 (231-232) interacts with substrate; the sequence is GT.

Belongs to the diaminopimelate epimerase family. As to quaternary structure, homodimer.

Its subcellular location is the cytoplasm. It catalyses the reaction (2S,6S)-2,6-diaminopimelate = meso-2,6-diaminopimelate. The protein operates within amino-acid biosynthesis; L-lysine biosynthesis via DAP pathway; DL-2,6-diaminopimelate from LL-2,6-diaminopimelate: step 1/1. Functionally, catalyzes the stereoinversion of LL-2,6-diaminopimelate (L,L-DAP) to meso-diaminopimelate (meso-DAP), a precursor of L-lysine and an essential component of the bacterial peptidoglycan. This is Diaminopimelate epimerase from Mycolicibacterium paratuberculosis (strain ATCC BAA-968 / K-10) (Mycobacterium paratuberculosis).